A 312-amino-acid chain; its full sequence is Ornithine carbamoyltransferase (312 aa).

Carbamoyl phosphate is bound by residues 59 to 62, Q86, R110, and 137 to 140; these read STRT and HPCQ. Residues N167, D231, and 235-236 contribute to the L-ornithine site; that span reads SM. Carbamoyl phosphate-binding residues include C271 and R299.

This sequence belongs to the aspartate/ornithine carbamoyltransferase superfamily. OTCase family.

Its subcellular location is the cytoplasm. The enzyme catalyses carbamoyl phosphate + L-ornithine = L-citrulline + phosphate + H(+). The protein operates within amino-acid biosynthesis; L-arginine biosynthesis; L-arginine from L-ornithine and carbamoyl phosphate: step 1/3. Functionally, reversibly catalyzes the transfer of the carbamoyl group from carbamoyl phosphate (CP) to the N(epsilon) atom of ornithine (ORN) to produce L-citrulline. The polypeptide is Ornithine carbamoyltransferase (Methanopyrus kandleri (strain AV19 / DSM 6324 / JCM 9639 / NBRC 100938)).